Here is a 631-residue protein sequence, read N- to C-terminus: DNA mismatch repair protein MutL (631 aa).

This sequence belongs to the DNA mismatch repair MutL/HexB family.

Its function is as follows. This protein is involved in the repair of mismatches in DNA. It is required for dam-dependent methyl-directed DNA mismatch repair. May act as a 'molecular matchmaker', a protein that promotes the formation of a stable complex between two or more DNA-binding proteins in an ATP-dependent manner without itself being part of a final effector complex. The chain is DNA mismatch repair protein MutL from Mannheimia succiniciproducens (strain KCTC 0769BP / MBEL55E).